Consider the following 1305-residue polypeptide: Contactin-associated protein-like 5 (1305 aa).

A signal peptide spans 1 to 22 (MDSPALGAVALLLAGFWHLGLT). Residues 23 to 174 (ATNYNCDGAL…IGLRVEVFGC (152 aa)) form the F5/8 type C domain. Over 23–1236 (ATNYNCDGAL…PLTNAVRSDS (1214 aa)) the chain is Extracellular. Laminin G-like domains lie at 180 to 360 (IADF…TFSC) and 367 to 544 (PITF…IDLC). Disulfide bonds link Cys329–Cys360, Cys512–Cys544, Cys550–Cys561, Cys555–Cys570, and Cys572–Cys582. An EGF-like 1 domain is found at 546-583 (IKDRCLPNYCEHGGKCSQSWTTFYCDCNDTSYMGATCH). The Fibrinogen C-terminal domain maps to 584 to 790 (NSIYEQSCEA…LHCYGDRQFW (207 aa)). A Laminin G-like 3 domain is found at 791-956 (NAASFNTEAS…KMTPGVKPGC (166 aa)). Disulfide bonds link Cys929–Cys956, Cys960–Cys973, Cys967–Cys982, Cys984–Cys994, and Cys1163–Cys1198. Positions 957–995 (PGHCSSYGNLCHNGGKCVEKYNGYSCDCTSSAYEGPFCK) constitute an EGF-like 2 domain. In terms of domain architecture, Laminin G-like 4 spans 1017–1198 (PVTKNASTSS…VKGSLTESSC (182 aa)). A helical transmembrane segment spans residues 1237-1257 (AVIGGVIAVVIFIIFCIIAIM). Over 1258–1305 (SRFLYQHKQAHRSSQTKEKEYPENLESSFKADIDLQNTVSECKREYFI) the chain is Cytoplasmic.

The protein belongs to the neurexin family. As to expression, expressed in brain.

It localises to the membrane. May play a role in the correct development and proper functioning of the peripheral and central nervous system and be involved in cell adhesion and intercellular communication. The chain is Contactin-associated protein-like 5 (CNTNAP5) from Gallus gallus (Chicken).